A 1066-amino-acid chain; its full sequence is Elongation factor 3 (1066 aa).

HEAT repeat units follow at residues 112–149 (FIFE…VMSP), 151–188 (AAQQ…ACPE), 192–229 (ALMP…LISN), 231–268 (DIER…EVDS), 269–306 (ATLA…LVDN), and 312–353 (PFLG…VTGD). Residue T418 participates in ADP binding. 2 ABC transporter domains span residues 454 to 672 (EEGE…YAEL) and 699 to 1015 (IKMK…KKEE). The ADP site is built by N735, E944, N947, and H973. The interval 997–1066 (GHDWTESNSK…YDSADELEDL (70 aa)) is disordered. Basic residues predominate over residues 1042 to 1054 (RKAKKDRMARKKA).

This sequence belongs to the ABC transporter superfamily. ABCF family. EF3 subfamily.

It is found in the cytoplasm. It localises to the cytosol. The catalysed reaction is ATP + H2O = ADP + phosphate + H(+). The protein operates within protein biosynthesis; polypeptide chain elongation. Its function is as follows. Ribosome-dependent ATPase that functions in cytoplasmic translation elongation. Required for the ATP-dependent release of deacylated tRNA from the ribosomal E-site during protein biosynthesis. Stimulates the eEF1A-dependent binding of aminoacyl-tRNA to the ribosomal A-site, which has reduced affinity for tRNA as long as the E-site is occupied. Assists translation termination by stimulating the release of nascent protein from the ribosome by release factors. The polypeptide is Elongation factor 3 (Mycosarcoma maydis (Corn smut fungus)).